A 404-amino-acid polypeptide reads, in one-letter code: Argininosuccinate synthase (404 aa).

15 to 23 provides a ligand contact to ATP; that stretch reads AYSGGLDTS. Tyr-94 contacts L-citrulline. Residue Gly-124 participates in ATP binding. Residues Thr-126, Asn-130, and Asp-131 each coordinate L-aspartate. Residue Asn-130 coordinates L-citrulline. 4 residues coordinate L-citrulline: Arg-134, Ser-182, Glu-266, and Tyr-278.

Belongs to the argininosuccinate synthase family. Type 1 subfamily. Homotetramer.

The protein localises to the cytoplasm. It carries out the reaction L-citrulline + L-aspartate + ATP = 2-(N(omega)-L-arginino)succinate + AMP + diphosphate + H(+). It participates in amino-acid biosynthesis; L-arginine biosynthesis; L-arginine from L-ornithine and carbamoyl phosphate: step 2/3. In Streptomyces avermitilis (strain ATCC 31267 / DSM 46492 / JCM 5070 / NBRC 14893 / NCIMB 12804 / NRRL 8165 / MA-4680), this protein is Argininosuccinate synthase.